A 211-amino-acid chain; its full sequence is NADH-quinone oxidoreductase subunit I (211 aa).

4Fe-4S ferredoxin-type domains lie at 90–119 (RLWESDTERCIGCGLCEKICISNCIRIDTK) and 129–158 (TEYSINLGRCIFCGYCAEVCPELAITHGGE). [4Fe-4S] cluster contacts are provided by cysteine 99, cysteine 102, cysteine 105, cysteine 109, cysteine 138, cysteine 141, cysteine 144, and cysteine 148.

It belongs to the complex I 23 kDa subunit family. In terms of assembly, NDH-1 is composed of 14 different subunits. Subunits NuoA, H, J, K, L, M, N constitute the membrane sector of the complex. [4Fe-4S] cluster is required as a cofactor.

The protein resides in the cell inner membrane. The enzyme catalyses a quinone + NADH + 5 H(+)(in) = a quinol + NAD(+) + 4 H(+)(out). In terms of biological role, NDH-1 shuttles electrons from NADH, via FMN and iron-sulfur (Fe-S) centers, to quinones in the respiratory chain. The immediate electron acceptor for the enzyme in this species is believed to be ubiquinone. Couples the redox reaction to proton translocation (for every two electrons transferred, four hydrogen ions are translocated across the cytoplasmic membrane), and thus conserves the redox energy in a proton gradient. The sequence is that of NADH-quinone oxidoreductase subunit I from Sulfurimonas denitrificans (strain ATCC 33889 / DSM 1251) (Thiomicrospira denitrificans (strain ATCC 33889 / DSM 1251)).